The following is a 96-amino-acid chain: Neurotoxin 23 (96 aa).

The N-terminal stretch at 1 to 22 (MKNIVIIITVAVLFNLFGESLQ) is a signal peptide. Positions 26-89 (FETYPLNQDD…FLAEIIDTCN (64 aa)) constitute an LCN-type CS-alpha/beta domain. Intrachain disulfides connect cysteine 40/cysteine 63, cysteine 49/cysteine 68, and cysteine 53/cysteine 70.

The protein belongs to the long (3 C-C) scorpion toxin superfamily. As to expression, expressed by the venom gland.

It localises to the secreted. The protein is Neurotoxin 23 of Lychas mucronatus (Chinese swimming scorpion).